A 604-amino-acid polypeptide reads, in one-letter code: MSMYPHRPIAGAPIQNMGRLNELLDGIRMEFESQARQYETCQHDLATQLQELQVIREKVFQMEQHQMNVKQKYEDEIALLRRQLEARGGAPGNMNPPPQHPGQQQPPAIGLGSNVFSAIMAGQGGQALVPPPPPPQQQEQPAHMPAPPGLQGPPPPPPPPSQQPPFQQQYQGPQGPGNFPPQPPQSTASPGPAGKRGIGRPPAGGPATPQINTPIPYNGGPAQSPQVPTHPTPDHTRMAQHHQPPPPPPSQTNALSELDPDRLPNHIKKMKDDWWVIFNAAVPRVLDVELVHTLQHESVVCCVRFSMDGKYVATGCNRSAQIYDVETGEKLCILQDENIDLTGDLYIRSVCFSPDGKYLATGAEDKLIRVWDIQSRTIRNTFHGHEQDIYSLDFSRDGRTIASGSGDRTVRLWDIETGQNTSVLSIEDGVTTVAISPDKQFVAAGSLDKSVRVWDMRGYLAERLEGPDGHKDSVYSVAFSPDGRNLVSGSLDKTIKMWELSAPRGIPSSAPPKGGRCIKTFEGHRDFVLSVALTPDSQWVLSGSKDRGVQFWDPRTGHTQLMLQGHKNSVISVAPSPVTGPNGVGYFATGSGDMRARIWSYSRI.

Disordered stretches follow at residues 87–110 (RGGAPGNMNPPPQHPGQQQPPAIG) and 124–264 (GGQA…DRLP). The segment covering 144–163 (MPAPPGLQGPPPPPPPPSQQ) has biased composition (pro residues). Composition is skewed to low complexity over residues 164–177 (PPFQQQYQGPQGPG) and 190–209 (PGPAGKRGIGRPPAGGPATP). Polar residues predominate over residues 210-229 (QINTPIPYNGGPAQSPQVPT). WD repeat units lie at residues 295-324 (QHESVVCCVRFSMDGKYVATGCNRSAQIYD), 342-372 (TGDLYIRSVCFSPDGKYLATGAEDKLIRVWD), 384-414 (GHEQDIYSLDFSRDGRTIASGSGDRTVRLWD), 425-455 (SIEDGVTTVAISPDKQFVAAGSLDKSVRVWD), 469-499 (GHKDSVYSVAFSPDGRNLVSGSLDKTIKMWE), 523-553 (GHRDFVLSVALTPDSQWVLSGSKDRGVQFWD), and 565-600 (GHKNSVISVAPSPVTGPNGVGYFATGSGDMRARIWS).

In terms of biological role, represses transcription by RNA polymerase II. May be involved at several stages of conidiation and other growth and development processes. Appears to regulate genes that are expressed in asexual and sexual spore pathways. In Neurospora crassa (strain ATCC 24698 / 74-OR23-1A / CBS 708.71 / DSM 1257 / FGSC 987), this protein is Transcriptional repressor rco-1 (rco-1).